Reading from the N-terminus, the 452-residue chain is MASNFVKLGSQFIGKLTRVTSLPAHHTDLVQRVSILKDELLTIGNSKEKFQNVLDQKGQWLFRTYRDGAGILELMDQLFPRHYLALQVLEWRRGQKDYCIPLTSEEYAKGIKIAGRARDINLAVYLFDEAAKKRMQTASVYNSLMSVYMWNGLAEECQSLFKDFRRQTHCAPTVVTYNILVSVYGRLLMVKNMEAAFEELQKVKLPPNSVTYNFLIAGYMTAWNWDKMEATFQEMKRGPVEPDTDTYQLMLRGYANSGNLNRMEEMYEVIKDQVGVNSGPLVRAMICAYCKKAVEDRVQKIENLLSLLSGEEYLPWLNVLLIRLYAQEDFVEAMESKINEAFEQKTCVNKSSIMRAIIAAYFRCNEVDNLANFVKRAESAGWKLCRSLYHCKIMMYGSQKRFEEMEGVVNEMAETNYGLVTKTFAIMIKAYKNHGMESDAEKVKGKMLKRGL.

PPR repeat units lie at residues 137–171 (TASV…THCA), 173–207 (TVVT…KLPP), 208–242 (NSVT…PVEP), 243–273 (DTDT…IKDQ), 350–384 (KSSI…GWKL), 385–419 (CRSL…NYGL), and 420–452 (VTKT…KRGL).

This sequence belongs to the PPR family. P subfamily.

The protein is Pentatricopeptide repeat-containing protein At2g30780 of Arabidopsis thaliana (Mouse-ear cress).